We begin with the raw amino-acid sequence, 285 residues long: Neuralized-like protein 2 (285 aa).

Positions 1–20 (MAAASEPVDSGALWGLERPE) are disordered. Residues 23 to 244 (PTRFHRVHGA…STKSVRLVQL (222 aa)) enclose the NHR domain. The SOCS box domain maps to 250-285 (SLQTLCRLVIQRSMVHRLAIDGLHLPKELKDFCKYE).

Probable component the ECS(NEURL2) E3 ubiquitin-protein ligase complex consisting of ELOB/Elongin B, ELOC/Elongin C, CUL5, RBX1 and NEURL2. Interacts with CTNNB1. As to expression, expressed specifically in skeletal and cardiac muscles.

The protein resides in the cytoplasm. Its pathway is protein modification; protein ubiquitination. In terms of biological role, plays an important role in the process of myofiber differentiation and maturation. Probable substrate-recognition component of a SCF-like ECS (Elongin BC-CUL2/5-SOCS-box protein) E3 ubiquitin-protein ligase complex, which mediates the ubiquitination of proteins. Probably contributes to catalysis through recognition and positioning of the substrate and the ubiquitin-conjugating enzyme. During myogenesis, controls the ubiquitination and degradation of the specific pool of CTNNB1/beta-catenin located at the sarcolemma. This Homo sapiens (Human) protein is Neuralized-like protein 2 (NEURL2).